The sequence spans 118 residues: uncharacterized protein (118 aa).

It is found in the mitochondrion. This is an uncharacterized protein from Arabidopsis thaliana (Mouse-ear cress).